A 129-amino-acid polypeptide reads, in one-letter code: Histone H2A.2 (129 aa).

K5 carries the post-translational modification N6-acetyllysine. Q108 bears the N5-methylglutamine mark.

The protein belongs to the histone H2A family. In terms of assembly, the nucleosome is a histone octamer containing two molecules each of H2A, H2B, H3 and H4 assembled in one H3-H4 heterotetramer and two H2A-H2B heterodimers. The octamer wraps approximately 147 bp of DNA. In terms of processing, acetylated by ESA1 to form H2AK4ac.

The protein resides in the nucleus. Its subcellular location is the chromosome. Its function is as follows. Core component of nucleosome which plays a central role in DNA double strand break (DSB) repair. Nucleosomes wrap and compact DNA into chromatin, limiting DNA accessibility to the cellular machineries which require DNA as a template. Histones thereby play a central role in transcription regulation, DNA repair, DNA replication and chromosomal stability. DNA accessibility is regulated via a complex set of post-translational modifications of histones, also called histone code, and nucleosome remodeling. The protein is Histone H2A.2 (HTA2) of Lodderomyces elongisporus (strain ATCC 11503 / CBS 2605 / JCM 1781 / NBRC 1676 / NRRL YB-4239) (Yeast).